The sequence spans 331 residues: Ketol-acid reductoisomerase (NADP(+)) (331 aa).

A KARI N-terminal Rossmann domain is found at 2 to 182 (AQLFYDSDAD…GGTRAGILET (181 aa)). Residues 25 to 28 (YGSQ), S51, S53, and 83 to 86 (DEFQ) each bind NADP(+). H108 is a catalytic residue. G134 serves as a coordination point for NADP(+). The KARI C-terminal knotted domain maps to 183–328 (NFKEETETDL…KGLRAMFSWL (146 aa)). Residues D191, E195, E227, and E231 each coordinate Mg(2+). S252 contributes to the substrate binding site.

The protein belongs to the ketol-acid reductoisomerase family. Mg(2+) is required as a cofactor.

It carries out the reaction (2R)-2,3-dihydroxy-3-methylbutanoate + NADP(+) = (2S)-2-acetolactate + NADPH + H(+). The enzyme catalyses (2R,3R)-2,3-dihydroxy-3-methylpentanoate + NADP(+) = (S)-2-ethyl-2-hydroxy-3-oxobutanoate + NADPH + H(+). It functions in the pathway amino-acid biosynthesis; L-isoleucine biosynthesis; L-isoleucine from 2-oxobutanoate: step 2/4. It participates in amino-acid biosynthesis; L-valine biosynthesis; L-valine from pyruvate: step 2/4. Its function is as follows. Involved in the biosynthesis of branched-chain amino acids (BCAA). Catalyzes an alkyl-migration followed by a ketol-acid reduction of (S)-2-acetolactate (S2AL) to yield (R)-2,3-dihydroxy-isovalerate. In the isomerase reaction, S2AL is rearranged via a Mg-dependent methyl migration to produce 3-hydroxy-3-methyl-2-ketobutyrate (HMKB). In the reductase reaction, this 2-ketoacid undergoes a metal-dependent reduction by NADPH to yield (R)-2,3-dihydroxy-isovalerate. This Prochlorococcus marinus (strain MIT 9211) protein is Ketol-acid reductoisomerase (NADP(+)).